A 339-amino-acid polypeptide reads, in one-letter code: Dehydrogenase/reductase SDR family member 7 (339 aa).

A signal peptide spans 1-28 (MNWELLLWLLVLCALLLLLVQLLRFLRA). NAD(+) contacts are provided by serine 60 and isoleucine 62. A substrate-binding site is contributed by serine 190. Tyrosine 203, lysine 207, and serine 239 together coordinate NAD(+). Tyrosine 203 acts as the Proton acceptor in catalysis.

This sequence belongs to the short-chain dehydrogenases/reductases (SDR) family. In terms of tissue distribution, found predominantly in the adrenal glands, liver, thyroid, prostate, small intestine, colon, stomach, kidney and brain. Lower levels observed in skeletal muscle, the lung and the spleen.

It localises to the endoplasmic reticulum membrane. It carries out the reaction all-trans-retinol + NADP(+) = all-trans-retinal + NADPH + H(+). The enzyme catalyses 5alpha-androstane-3alpha,17beta-diol + NADP(+) = 17beta-hydroxy-5alpha-androstan-3-one + NADPH + H(+). NADPH-dependent oxidoreductase which catalyzes the reduction of a variety of compounds bearing carbonyl groups including steroids, retinoids and xenobiotics. Catalyzes the reduction/inactivation of 5alpha-dihydrotestosterone to 3alpha-androstanediol, with a possible role in the modulation of androgen receptor function. Involved in the reduction of all-trans-retinal to all-trans-retinol. Converts cortisone to 20beta-dihydrocortisone in vitro, although the physiological relevance of this activity is questionable. Reduces exogenous compounds such as quinones (1,2-naphtoquinone, 9,10-phenantrenequinone and benzoquinone) and other xenobiotics (alpha-diketones) in vitro, suggesting a role in the biotransformation of xenobiotics with carbonyl group. A dehydrogenase activity has not been detected so far. May play a role as tumor suppressor. The protein is Dehydrogenase/reductase SDR family member 7 of Homo sapiens (Human).